The primary structure comprises 94 residues: Small ribosomal subunit protein bS18 (94 aa).

It belongs to the bacterial ribosomal protein bS18 family. As to quaternary structure, part of the 30S ribosomal subunit. Forms a tight heterodimer with protein bS6.

Functionally, binds as a heterodimer with protein bS6 to the central domain of the 16S rRNA, where it helps stabilize the platform of the 30S subunit. This is Small ribosomal subunit protein bS18 from Albidiferax ferrireducens (strain ATCC BAA-621 / DSM 15236 / T118) (Rhodoferax ferrireducens).